The sequence spans 473 residues: Glutamate--tRNA ligase (473 aa).

The 'HIGH' region signature appears at Pro11 to Gly21. Positions Lys240–Arg244 match the 'KMSKS' region motif. Residue Lys243 participates in ATP binding.

Belongs to the class-I aminoacyl-tRNA synthetase family. Glutamate--tRNA ligase type 1 subfamily. In terms of assembly, monomer.

Its subcellular location is the cytoplasm. It carries out the reaction tRNA(Glu) + L-glutamate + ATP = L-glutamyl-tRNA(Glu) + AMP + diphosphate. In terms of biological role, catalyzes the attachment of glutamate to tRNA(Glu) in a two-step reaction: glutamate is first activated by ATP to form Glu-AMP and then transferred to the acceptor end of tRNA(Glu). This Rhodopseudomonas palustris (strain HaA2) protein is Glutamate--tRNA ligase.